A 722-amino-acid chain; its full sequence is Disintegrin and metalloproteinase domain-containing protein 21 (722 aa).

An N-terminal signal peptide occupies residues 1–31 (MAVDGTLVYIRVTLLLLWLGVFLSISGYCQA). The propeptide occupies 32–196 (GPSQHFTSPE…FEEAENSALE (165 aa)). Residue asparagine 164 is glycosylated (N-linked (GlcNAc...) asparagine). Residues 171–178 (MRCGLTEK) carry the Cysteine switch motif. Cysteine 173 provides a ligand contact to Zn(2+). Residues 197 to 681 (PKSAGDWWTH…DSGPASAKRG (485 aa)) are Extracellular-facing. A Peptidase M12B domain is found at 208 to 398 (WFLELVVVVN…NQGSCLHNPP (191 aa)). N-linked (GlcNAc...) asparagine glycosylation is present at asparagine 227. 3 disulfide bridges follow: cysteine 316–cysteine 393, cysteine 356–cysteine 378, and cysteine 358–cysteine 363. Position 341 (histidine 341) interacts with Zn(2+). Residue glutamate 342 is part of the active site. The Zn(2+) site is built by histidine 345 and histidine 351. 5 N-linked (GlcNAc...) asparagine glycosylation sites follow: asparagine 377, asparagine 437, asparagine 478, asparagine 546, and asparagine 600. In terms of domain architecture, Disintegrin spans 406–492 (LKRCGNGVVE…QCPEDRYVQD (87 aa)). Cysteine 464 and cysteine 484 are joined by a disulfide. Intrachain disulfides connect cysteine 634-cysteine 645, cysteine 639-cysteine 651, and cysteine 653-cysteine 662. The region spanning 634–663 (CLPETCNMKGICNNKHHCHCGYGWSPPYCQ) is the EGF-like domain. Residues 682 to 702 (VFLPLIVIPSLSVLTFLFTVG) traverse the membrane as a helical segment. The Cytoplasmic portion of the chain corresponds to 703 to 722 (LLMYLRQCSGPKETKAHSSG).

Requires Zn(2+) as cofactor. Post-translationally, has no obvious cleavage site for furin endopeptidase, suggesting that the proteolytic processing is regulated.

It is found in the membrane. May be involved in sperm maturation and/or fertilization. May also be involved in epithelia functions associated with establishing and maintaining gradients of ions or nutrients. In Homo sapiens (Human), this protein is Disintegrin and metalloproteinase domain-containing protein 21 (ADAM21).